A 101-amino-acid chain; its full sequence is Small ribosomal subunit protein uS14 (101 aa).

The protein belongs to the universal ribosomal protein uS14 family. As to quaternary structure, part of the 30S ribosomal subunit. Contacts proteins S3 and S10.

Binds 16S rRNA, required for the assembly of 30S particles and may also be responsible for determining the conformation of the 16S rRNA at the A site. The polypeptide is Small ribosomal subunit protein uS14 (Francisella tularensis subsp. novicida (strain U112)).